A 322-amino-acid chain; its full sequence is CMP-sialic acid transporter 1 (322 aa).

At 1–2 (MQ) the chain is on the cytoplasmic side. A helical membrane pass occupies residues 3–23 (WYLVAALLTVLTSSQGILTTL). Topologically, residues 24-33 (SQSNGKYKYD) are lumenal. Residues 34-54 (YATIPFLAELFKLSFSSFFLW) form a helical membrane-spanning segment. The Cytoplasmic segment spans residues 55–75 (KECQSSSPPRMTKEWRSIRLY). Residues 76–96 (LVPSVIYLIHNNVQFATLTYV) traverse the membrane as a helical segment. At 97 to 100 (DPST) the chain is on the lumenal side. A helical transmembrane segment spans residues 101-120 (YQIMGNLKIVTTGILFRLVL). The Cytoplasmic segment spans residues 121–126 (KRKLSN). The chain crosses the membrane as a helical span at residues 127-144 (LQWMAVVLLAVGTTTSQV). The Lumenal segment spans residues 145 to 157 (KGCGDAPCDSLFS). A helical transmembrane segment spans residues 158 to 178 (APFQGYMLGILSACLSALAGV). The Cytoplasmic segment spans residues 179–198 (YTEYLMKKNNDSLYWQNVQL). The helical transmembrane segment at 199–219 (YTFGVIFNMGWLIYGDFKAGF) threads the bilayer. At 220–233 (ERGPWWQRLFNGYS) the chain is on the lumenal side. Residues 234 to 254 (ITTWMVVFNLGSTGLLVSWLM) traverse the membrane as a helical segment. Topologically, residues 255–262 (KYSDNIVK) are cytoplasmic. The chain crosses the membrane as a helical span at residues 263 to 283 (VYSTSMGMLLTMVLSVYLFNV). The Lumenal segment spans residues 284–286 (RAT).

The protein belongs to the nucleotide-sugar transporter family. CMP-Sialate:CMP antiporter (TC 2.A.7.12) subfamily.

The protein localises to the golgi apparatus membrane. Sugar transporter involved in the transport of CMP-sialic acid from the cytoplasm into the Golgi. May transport important nucleotide sugars such as CMP-Kdo (2-keto-3-deoxy-D-manno-octulosonic acid) in physiological conditions. In Oryza sativa subsp. indica (Rice), this protein is CMP-sialic acid transporter 1.